The primary structure comprises 1790 residues: Non-reducing polyketide synthase gsfA (1790 aa).

The segment at glycine 20 to histidine 263 is N-terminal acylcarrier protein transacylase domain (SAT). A Ketosynthase family 3 (KS3) domain is found at serine 392 to glutamate 822. Catalysis depends on for beta-ketoacyl synthase activity residues cysteine 563, histidine 698, and histidine 741. The segment at phenylalanine 922–asparagine 1223 is malonyl-CoA:ACP transacylase (MAT) domain. A product template (PT) domain region spans residues threonine 1298–glutamine 1615. Residues histidine 1302–leucine 1435 form an N-terminal hotdog fold region. The region spanning histidine 1302–asparagine 1611 is the PKS/mFAS DH domain. The Proton acceptor; for dehydratase activity role is filled by histidine 1334. Residues methionine 1460–asparagine 1611 form a C-terminal hotdog fold region. Aspartate 1518 functions as the Proton donor; for dehydratase activity in the catalytic mechanism. Disordered stretches follow at residues proline 1621–threonine 1648 and leucine 1686–alanine 1718. Positions serine 1699–serine 1708 are enriched in basic and acidic residues. The 75-residue stretch at aspartate 1716 to serine 1790 folds into the Carrier domain. At serine 1753 the chain carries O-(pantetheine 4'-phosphoryl)serine.

The catalysed reaction is 6 malonyl-CoA + acetyl-CoA + 4 H(+) = 2-(2,4-dihydroxy-6-oxidobenzoyl)-5-hydroxy-3-methylbenzenolate + 6 CO2 + 7 CoA + H2O. The protein operates within secondary metabolite biosynthesis; terpenoid biosynthesis. Its function is as follows. Norlichexanthone synthase; part of the gene cluster that mediates the biosynthesis of griseofulvin, an important antifungal drug that has been in use for a long time for treating dermatophyte infections. The first step of the pathway is the formation of the heptaketide backbone by gsfA which is initiated by priming with acetyl-CoA, followed by sequential condensations of 6 malonyl-CoA units. The resulting benzophenone can undergo a spontaneous dehydration to form norlichexanthone. However, the true precursor for the griseofulvin biosynthesis is not norlichexanthone, but the heptaketide benzophenone that is O-methylated at 3-OH by gsfB to produce griseophenone D which is further methylated at 9-OH by gsfC to yield griseophenone C. Griseophenone C is then substrate of halogenase gsfI which is responsible for the regio-specific chlorination at the C13 position to form griseophenone B. The cytochrome P450 gsfF catalyzes the coupling of orcinol and phloroglucinol rings in griseophenone B to form desmethyl-dehydrogriseofulvin A which is further methylated at 5-OH by gsfD to yield dehydrogriseofulvin. Finally, gsfE performs stereospecific reduction of enone 18 of dehydrogriseofulvin to afford the final product griseofulvin. The protein is Non-reducing polyketide synthase gsfA of Penicillium aethiopicum.